The following is a 424-amino-acid chain: Serine--tRNA ligase (424 aa).

231-233 (TAE) is an L-serine binding site. ATP is bound at residue 262 to 264 (RSE). Glutamate 285 contributes to the L-serine binding site. ATP is bound at residue 349–352 (EISS). Serine 385 lines the L-serine pocket.

This sequence belongs to the class-II aminoacyl-tRNA synthetase family. Type-1 seryl-tRNA synthetase subfamily. Homodimer. The tRNA molecule binds across the dimer.

It is found in the cytoplasm. The catalysed reaction is tRNA(Ser) + L-serine + ATP = L-seryl-tRNA(Ser) + AMP + diphosphate + H(+). It catalyses the reaction tRNA(Sec) + L-serine + ATP = L-seryl-tRNA(Sec) + AMP + diphosphate + H(+). It participates in aminoacyl-tRNA biosynthesis; selenocysteinyl-tRNA(Sec) biosynthesis; L-seryl-tRNA(Sec) from L-serine and tRNA(Sec): step 1/1. Its function is as follows. Catalyzes the attachment of serine to tRNA(Ser). Is also able to aminoacylate tRNA(Sec) with serine, to form the misacylated tRNA L-seryl-tRNA(Sec), which will be further converted into selenocysteinyl-tRNA(Sec). The polypeptide is Serine--tRNA ligase (Bacillus cereus (strain B4264)).